We begin with the raw amino-acid sequence, 1503 residues long: Translocase of chloroplast 159, chloroplastic (1503 aa).

A compositionally biased stretch (polar residues) spans 1–24 (MDSKSVTPEPTNPFYASSGQSGKT). A disordered region spans residues 1–210 (MDSKSVTPEP…GGKVDVDDKS (210 aa)). Residues 21 to 37 (SGKTYASVVAAAAAAAA) traverse the membrane as a helical segment. Ser-71 is modified (phosphoserine). Composition is skewed to basic and acidic residues over residues 85 to 98 (KVSD…KEDS) and 176 to 210 (SESK…DDKS). Phosphoserine occurs at positions 210, 281, and 288. Disordered regions lie at residues 298 to 338 (KFTS…DVEK) and 429 to 464 (VHNK…SEGD). A compositionally biased stretch (basic and acidic residues) spans 447 to 456 (ESDKATEEGG). Phosphoserine is present on residues Ser-448, Ser-461, Ser-589, Ser-609, Ser-630, Ser-632, and Ser-665. The segment at 610-633 (FGGKEVDQEPSGEGVTRVDGSESE) is disordered. Positions 781–804 (EEEKQKLEKLQSLRVKFLRLLQRL) form a coiled coil. The 235-residue stretch at 853-1087 (IFSLNILVLG…RPQEPLDHRK (235 aa)) folds into the AIG1-type G domain. Residues 862 to 869 (GKAGVGKS) form a G1 region. Residues 865–870 (GVGKSA) and 884–889 (DAFGLS) contribute to the GTP site. Residue Ser-869 coordinates Mg(2+). The interval 884–887 (DAFG) is homodimerization. The tract at residues 889–893 (STTSV) is G2. The G3 stretch occupies residues 909–912 (DTPG). Residues 947 to 952 (RLDTQT) form a homodimerization region. Residues 981–984 (THAA) form a G4 region. Residues His-982 and 1035 to 1036 (EN) contribute to the GTP site. The interval 1035–1037 (ENH) is G5. Residues 1175-1203 (DYRVKLLQKKQWREELKRMKEMKKNGKKL) are a coiled coil. The tract at residues 1203 to 1222 (LGESEFGYPGEEDDPENGAP) is disordered.

It belongs to the TRAFAC class TrmE-Era-EngA-EngB-Septin-like GTPase superfamily. AIG1/Toc34/Toc159-like paraseptin GTPase family. TOC159 subfamily. Homodimer and heterodimer with TOC33. Part of the TOC core complex that includes 1 protein for the specific recognition of transit peptides surrounded by a ring composed of four proteins forming translocation channels, and four to five GTP-binding proteins providing energy. This core complex can interact with components of the TIC complex to form a larger import complex. Chloroplastic protein precursor such as prSS (precursor of the RuBisCO small subunit) interacts with these complexes. The TOC complex contains a specific subset of polar lipids such as digalactosyldiacylglyceride (DGDG), phosphatidylcholine (PC) and phosphatidylglycerol (PG). Interacts with SP1. Mg(2+) is required as a cofactor. Post-translationally, phosphorylated by KOC1.

Its subcellular location is the plastid. It localises to the chloroplast outer membrane. It is found in the cytoplasm. Its function is as follows. GTPase involved in protein precursor import into chloroplasts. Seems to recognize chloroplast-destined precursor proteins and regulate their presentation to the translocation channel through GTP hydrolysis. Required for chloroplast biogenesis. Probably specialized in the import of nuclear encoded photosynthetic preproteins from the cytoplasm to the chloroplast. This Arabidopsis thaliana (Mouse-ear cress) protein is Translocase of chloroplast 159, chloroplastic.